We begin with the raw amino-acid sequence, 809 residues long: Phenylalanine--tRNA ligase beta subunit (809 aa).

The 116-residue stretch at 39 to 154 (APPTSKIVVG…EDTPVGQDIR (116 aa)) folds into the tRNA-binding domain. One can recognise a B5 domain in the interval 405–480 (PQRAPVKMRV…RIYGFEKIPA (76 aa)). Aspartate 458, aspartate 464, glutamate 467, and glutamate 468 together coordinate Mg(2+). Residues 707-808 (SKFPPVRRDI…RMARAGARLR (102 aa)) form the FDX-ACB domain.

The protein belongs to the phenylalanyl-tRNA synthetase beta subunit family. Type 1 subfamily. As to quaternary structure, tetramer of two alpha and two beta subunits. The cofactor is Mg(2+).

The protein localises to the cytoplasm. It catalyses the reaction tRNA(Phe) + L-phenylalanine + ATP = L-phenylalanyl-tRNA(Phe) + AMP + diphosphate + H(+). The protein is Phenylalanine--tRNA ligase beta subunit of Burkholderia lata (strain ATCC 17760 / DSM 23089 / LMG 22485 / NCIMB 9086 / R18194 / 383).